Here is a 138-residue protein sequence, read N- to C-terminus: Invertebrate-type lysozyme 6 (138 aa).

An N-terminal signal peptide occupies residues 1-18 (MFVKLCGILAFAVTYASS). Positions 19–138 (DCLQCICKKE…WNGIKGLGCS (120 aa)) constitute an I-type lysozyme domain. Intrachain disulfides connect Cys20–Cys106, Cys25–Cys31, Cys36–Cys45, Cys58–Cys86, Cys76–Cys82, and Cys98–Cys120. Catalysis depends on Glu28, which acts as the Proton donor. Catalysis depends on Asp39, which acts as the Nucleophile. Residue 51-57 (KLSYYKD) participates in substrate binding. Residues Tyr90 and 113–115 (HNG) contribute to the substrate site.

The protein belongs to the glycosyl hydrolase 22 family. Type-I lysozyme subfamily. In terms of tissue distribution, expressed in pharyngeal gland cells and duct projections, coelomocytes and intestine.

It catalyses the reaction Hydrolysis of (1-&gt;4)-beta-linkages between N-acetylmuramic acid and N-acetyl-D-glucosamine residues in a peptidoglycan and between N-acetyl-D-glucosamine residues in chitodextrins.. Has bacteriolytic activity against Gram-positive bacteria. This is Invertebrate-type lysozyme 6 from Caenorhabditis elegans.